The chain runs to 386 residues: Histidine decarboxylase (386 aa).

H120 contacts substrate. The residue at position 233 (K233) is an N6-(pyridoxal phosphate)lysine.

It belongs to the group II decarboxylase family. As to quaternary structure, homotetramer. Requires pyridoxal 5'-phosphate as cofactor.

It carries out the reaction L-histidine + H(+) = histamine + CO2. The polypeptide is Histidine decarboxylase (Vibrio campbellii (strain ATCC BAA-1116)).